The sequence spans 294 residues: MRIRFTKMQGAGNDFVVLDETRGTLGLTAAQYRFLADRHFGVGADQILTVRPPSKGAAEGVDFQYVIHNADGGEVEQCGNGARCFMRFVREHHLTDKDTVRVETLAGIIEPRMGADGRVTVDMGPPIFEPARVPFDTAGLDPQPTGSWHTWHLALGTHADSAIVSVAVLSMGNPHAVQVVDNVDTAPVARQGPLIEHHPRFAQRVNAGFMQVVDRSHIKLRVFERGAGETLACGTGACAAVVAGIRLGLLERRVDVQTHGGVLTIGWEGEGHPVLMTGPATTVFEGDIEVPELP.

The substrate site is built by Asn13, Gln46, and Asn69. Cys78 acts as the Proton donor in catalysis. Residues 79 to 80 (GN), Asn173, Asn206, and 224 to 225 (ER) contribute to the substrate site. Cys233 serves as the catalytic Proton acceptor. Position 234–235 (234–235 (GT)) interacts with substrate.

It belongs to the diaminopimelate epimerase family. In terms of assembly, homodimer.

The protein resides in the cytoplasm. It catalyses the reaction (2S,6S)-2,6-diaminopimelate = meso-2,6-diaminopimelate. The protein operates within amino-acid biosynthesis; L-lysine biosynthesis via DAP pathway; DL-2,6-diaminopimelate from LL-2,6-diaminopimelate: step 1/1. Its function is as follows. Catalyzes the stereoinversion of LL-2,6-diaminopimelate (L,L-DAP) to meso-diaminopimelate (meso-DAP), a precursor of L-lysine and an essential component of the bacterial peptidoglycan. This Variovorax paradoxus (strain S110) protein is Diaminopimelate epimerase.